We begin with the raw amino-acid sequence, 291 residues long: G1/S-specific cyclin-D2 (291 aa).

Positions 261–291 (TRQQTQQRNSSKSVDELDQASTPTDVQDINL) are disordered. Residues 279–291 (QASTPTDVQDINL) are compositionally biased toward polar residues. Threonine 282 carries the phosphothreonine modification.

This sequence belongs to the cyclin family. Cyclin D subfamily. As to quaternary structure, interacts with the cdk4 and cdk6 protein kinases to form a serine/threonine kinase holoenzyme complex. The cyclin subunit imparts substrate specificity to the complex. Post-translationally, phosphorylation at Thr-282 by MAP kinases is required for ubiquitination and degradation by the DCX(AMBRA1) complex. Ubiquitinated by the DCX(AMBRA1) complex during the transition from G1 to S cell phase, leading to its degradation: ubiquitination is dependent on Thr-282 phosphorylation. The DCX(AMBRA1) complex represents the major regulator of CCND2 stability during the G1/S transition.

It is found in the nucleus. The protein localises to the cytoplasm. Its subcellular location is the nucleus membrane. Functionally, regulatory component of the cyclin D2-CDK4 (DC) complex that phosphorylates and inhibits members of the retinoblastoma (RB) protein family including RB1 and regulates the cell-cycle during G(1)/S transition. Phosphorylation of RB1 allows dissociation of the transcription factor E2F from the RB/E2F complex and the subsequent transcription of E2F target genes which are responsible for the progression through the G(1) phase. Hypophosphorylates RB1 in early G(1) phase. Cyclin D-CDK4 complexes are major integrators of various mitogenenic and antimitogenic signals. This chain is G1/S-specific cyclin-D2 (ccnd2), found in Xenopus laevis (African clawed frog).